The chain runs to 182 residues: GTP cyclohydrolase 1 (182 aa).

Positions 73, 76, and 144 each coordinate Zn(2+).

Belongs to the GTP cyclohydrolase I family. Homomer.

The catalysed reaction is GTP + H2O = 7,8-dihydroneopterin 3'-triphosphate + formate + H(+). It participates in cofactor biosynthesis; 7,8-dihydroneopterin triphosphate biosynthesis; 7,8-dihydroneopterin triphosphate from GTP: step 1/1. This Hydrogenobaculum sp. (strain Y04AAS1) protein is GTP cyclohydrolase 1.